Consider the following 140-residue polypeptide: Small ribosomal subunit protein uS12 (140 aa).

The residue at position 102 (Asp102) is a 3-methylthioaspartic acid. A disordered region spans residues 121–140 (ANRQQSRSKYGAKKPKAAKK). Residues 130-140 (YGAKKPKAAKK) show a composition bias toward basic residues.

It belongs to the universal ribosomal protein uS12 family. Part of the 30S ribosomal subunit. Contacts proteins S8 and S17. May interact with IF1 in the 30S initiation complex.

In terms of biological role, with S4 and S5 plays an important role in translational accuracy. Functionally, interacts with and stabilizes bases of the 16S rRNA that are involved in tRNA selection in the A site and with the mRNA backbone. Located at the interface of the 30S and 50S subunits, it traverses the body of the 30S subunit contacting proteins on the other side and probably holding the rRNA structure together. The combined cluster of proteins S8, S12 and S17 appears to hold together the shoulder and platform of the 30S subunit. The polypeptide is Small ribosomal subunit protein uS12 (Alkaliphilus oremlandii (strain OhILAs) (Clostridium oremlandii (strain OhILAs))).